The following is a 367-amino-acid chain: Nodulation protein NolF (367 aa).

Belongs to the membrane fusion protein (MFP) (TC 8.A.1) family.

Involved in the production of Medicago-specific nodulation signal molecule. The polypeptide is Nodulation protein NolF (nolF) (Rhizobium meliloti (strain 1021) (Ensifer meliloti)).